Reading from the N-terminus, the 970-residue chain is Rho GTPase-activating protein gacK (970 aa).

The first 20 residues, 1–20 (MTLVYEKSSFVLIMAQIAEA), serve as a signal peptide directing secretion. 5 disordered regions span residues 30-49 (SNDL…SAAI), 258-285 (STCS…INQN), 312-446 (EITI…FSPT), 487-550 (STSN…NNNN), and 860-886 (TASS…NDDP). Composition is skewed to low complexity over residues 35–49 (STSA…SAAI) and 258–269 (STCSLSSNASNN). Over residues 321 to 333 (IPLPPQSSSPPPT) the composition is skewed to pro residues. The segment covering 334-383 (RNNQSSPSPSSPQQQNIMPTPPSTSLTPPQSPTLSPSSSTHSTPTQTTTT) has biased composition (low complexity). Residues 392-406 (PSTISQNNARKTQIP) are compositionally biased toward polar residues. A compositionally biased stretch (low complexity) spans 407-426 (TTTTTTTTTTTTTSTTSTTS). Polar residues predominate over residues 427–446 (PNPVVNNKNLNTPSSSFSPT). Residues 754 to 970 (IEDSELVEDN…LELIQFNKSL (217 aa)) enclose the Rho-GAP domain. Low complexity predominate over residues 860–885 (TASSAATANSSSSGSGNGNSSPNNDD).

It is found in the cytoplasm. Rho GTPase-activating protein involved in the signal transduction pathway. This Dictyostelium discoideum (Social amoeba) protein is Rho GTPase-activating protein gacK (gacK).